The sequence spans 467 residues: Glutamate--tRNA ligase (467 aa).

The 'HIGH' region signature appears at 12–22; that stretch reads PSPTGYLHIGG. The segment covering 114 to 128 has biased composition (basic and acidic residues); the sequence is EQEAKKEKPRYDGRW. The tract at residues 114 to 140 is disordered; the sequence is EQEAKKEKPRYDGRWRPAPGKTLPTPP. Positions 244–248 match the 'KMSKS' region motif; sequence KLSKR. Lys-247 contributes to the ATP binding site.

This sequence belongs to the class-I aminoacyl-tRNA synthetase family. Glutamate--tRNA ligase type 1 subfamily. In terms of assembly, monomer.

Its subcellular location is the cytoplasm. The catalysed reaction is tRNA(Glu) + L-glutamate + ATP = L-glutamyl-tRNA(Glu) + AMP + diphosphate. Catalyzes the attachment of glutamate to tRNA(Glu) in a two-step reaction: glutamate is first activated by ATP to form Glu-AMP and then transferred to the acceptor end of tRNA(Glu). The sequence is that of Glutamate--tRNA ligase from Azoarcus sp. (strain BH72).